Here is a 265-residue protein sequence, read N- to C-terminus: Exosome complex component Rrp4 (265 aa).

Residues 65–137 form the S1 motif domain; it reads GDNVIGKIVD…EVNNIDLTTK (73 aa). The KH domain maps to 147 to 205; sequence KGGQIVKITPSRVPRVIGRGGSMINMIKKLTMTRIIVGQNGWIWVNGKNEALEKLAIEA. The segment covering 241-254 has biased composition (acidic residues); that stretch reads EIPELEEEPQEETE. The interval 241-265 is disordered; the sequence is EIPELEEEPQEETEVNNNDGETRRT.

Belongs to the RRP4 family. Component of the archaeal exosome complex. Forms a trimer of Rrp4 and/or Csl4 subunits. The trimer associates with a hexameric ring-like arrangement composed of 3 Rrp41-Rrp42 heterodimers.

It localises to the cytoplasm. Its function is as follows. Non-catalytic component of the exosome, which is a complex involved in RNA degradation. Increases the RNA binding and the efficiency of RNA degradation. Confers strong poly(A) specificity to the exosome. This is Exosome complex component Rrp4 from Pyrococcus horikoshii (strain ATCC 700860 / DSM 12428 / JCM 9974 / NBRC 100139 / OT-3).